The following is a 97-amino-acid chain: Co-chaperonin GroES (97 aa).

The protein belongs to the GroES chaperonin family. As to quaternary structure, heptamer of 7 subunits arranged in a ring. Interacts with the chaperonin GroEL.

It localises to the cytoplasm. Its function is as follows. Together with the chaperonin GroEL, plays an essential role in assisting protein folding. The GroEL-GroES system forms a nano-cage that allows encapsulation of the non-native substrate proteins and provides a physical environment optimized to promote and accelerate protein folding. GroES binds to the apical surface of the GroEL ring, thereby capping the opening of the GroEL channel. This is Co-chaperonin GroES from Klebsiella aerogenes (Enterobacter aerogenes).